Consider the following 306-residue polypeptide: Ribosomal protein L11 methyltransferase (306 aa).

S-adenosyl-L-methionine-binding residues include T154, G179, D201, and N242.

It belongs to the methyltransferase superfamily. PrmA family.

It is found in the cytoplasm. It catalyses the reaction L-lysyl-[protein] + 3 S-adenosyl-L-methionine = N(6),N(6),N(6)-trimethyl-L-lysyl-[protein] + 3 S-adenosyl-L-homocysteine + 3 H(+). Functionally, methylates ribosomal protein L11. In Xanthomonas euvesicatoria pv. vesicatoria (strain 85-10) (Xanthomonas campestris pv. vesicatoria), this protein is Ribosomal protein L11 methyltransferase.